Consider the following 432-residue polypeptide: Tyrosine-protein phosphatase non-receptor type 1 (432 aa).

M1 carries the N-acetylmethionine modification. The Tyrosine-protein phosphatase domain occupies 3 to 277; the sequence is MEKEFEQIDK…RFSYLAVIEG (275 aa). Residue Y20 is modified to Phosphotyrosine. S50 is modified (phosphoserine; by PKB/AKT1, CLK1 and CLK2). Y66 is modified (phosphotyrosine; by EGFR). Residues D181 and 215–221 contribute to the substrate site; that span reads CSAGIGR. Catalysis depends on C215, which acts as the Phosphocysteine intermediate. Position 215 is a cysteine persulfide (C215). C215 carries the S-nitrosocysteine; in reversibly inhibited form modification. 2 positions are modified to phosphoserine; by CLK1 and CLK2: S242 and S243. Q262 contacts substrate. Positions 297 to 322 are disordered; the sequence is EDLEPPPEHVPPPPRPPKRTLEPHNG. 3 positions are modified to phosphoserine: S335, S362, and S364. Residues 350 to 402 form a disordered region; sequence SRAPSIAVHSMSSMSQDTEVRKRMVGGGLQSAQASVPTEEELSPTEEEQKAHR. Position 367 is a phosphothreonine (T367).

This sequence belongs to the protein-tyrosine phosphatase family. Non-receptor class 1 subfamily. In terms of assembly, interacts with EPHA3 (phosphorylated); dephosphorylates EPHA3 and may regulate its trafficking and function. Interacts with MET. Interacts with NCK1. In terms of processing, ser-50 is the major site of phosphorylation as compared to Ser-242 and Ser-243. Activated by phosphorylation at Ser-50. Post-translationally, S-nitrosylation of Cys-215 inactivates the enzyme activity. Sulfhydration at Cys-215 following endoplasmic reticulum stress inactivates the enzyme activity, promoting EIF2AK3/PERK activity. Found in several tissues including central nervous system, liver and kidney. A high level of expression was found in the hippocampus.

Its subcellular location is the endoplasmic reticulum membrane. The catalysed reaction is O-phospho-L-tyrosyl-[protein] + H2O = L-tyrosyl-[protein] + phosphate. Functionally, tyrosine-protein phosphatase which acts as a regulator of endoplasmic reticulum unfolded protein response. Mediates dephosphorylation of EIF2AK3/PERK; inactivating the protein kinase activity of EIF2AK3/PERK. May play an important role in CKII- and p60c-src-induced signal transduction cascades. May regulate the EFNA5-EPHA3 signaling pathway which modulates cell reorganization and cell-cell repulsion. May also regulate the hepatocyte growth factor receptor signaling pathway through dephosphorylation of MET. In Rattus norvegicus (Rat), this protein is Tyrosine-protein phosphatase non-receptor type 1 (Ptpn1).